The chain runs to 337 residues: Succinylglutamate desuccinylase (337 aa).

H59, E62, and H152 together coordinate Zn(2+). E216 is a catalytic residue.

The protein belongs to the AspA/AstE family. Succinylglutamate desuccinylase subfamily. It depends on Zn(2+) as a cofactor.

It carries out the reaction N-succinyl-L-glutamate + H2O = L-glutamate + succinate. The protein operates within amino-acid degradation; L-arginine degradation via AST pathway; L-glutamate and succinate from L-arginine: step 5/5. Its function is as follows. Transforms N(2)-succinylglutamate into succinate and glutamate. The chain is Succinylglutamate desuccinylase from Ectopseudomonas mendocina (strain ymp) (Pseudomonas mendocina).